The following is a 288-amino-acid chain: Bifunctional protein FolD 2 (288 aa).

Residues glycine 166–serine 168 and serine 191 each bind NADP(+).

This sequence belongs to the tetrahydrofolate dehydrogenase/cyclohydrolase family. Homodimer.

It carries out the reaction (6R)-5,10-methylene-5,6,7,8-tetrahydrofolate + NADP(+) = (6R)-5,10-methenyltetrahydrofolate + NADPH. The catalysed reaction is (6R)-5,10-methenyltetrahydrofolate + H2O = (6R)-10-formyltetrahydrofolate + H(+). Its pathway is one-carbon metabolism; tetrahydrofolate interconversion. Its function is as follows. Catalyzes the oxidation of 5,10-methylenetetrahydrofolate to 5,10-methenyltetrahydrofolate and then the hydrolysis of 5,10-methenyltetrahydrofolate to 10-formyltetrahydrofolate. This Frankia casuarinae (strain DSM 45818 / CECT 9043 / HFP020203 / CcI3) protein is Bifunctional protein FolD 2.